A 3333-amino-acid polypeptide reads, in one-letter code: Laminin subunit alpha-3 (3333 aa).

The signal sequence occupies residues 1-35 (MAAAARPRGRALGPVLPPTPLLLLVLRVLPACGAT). The Laminin N-terminal domain maps to 43-298 (AGLSLHPTYF…SIKDISIGGQ (256 aa)). Asn142 and Asn242 each carry an N-linked (GlcNAc...) asparagine glycan. The segment at 298-728 (QCVCNGHAEV…NNYYFPDLHH (431 aa)) is domain V. Disulfide bonds link Cys299–Cys308, Cys301–Cys319, Cys321–Cys330, Cys333–Cys353, Cys356–Cys365, Cys358–Cys390, Cys393–Cys402, Cys405–Cys423, Cys426–Cys436, Cys428–Cys443, Cys445–Cys454, Cys457–Cys467, Cys491–Cys503, Cys493–Cys509, Cys511–Cys520, Cys523–Cys533, Cys536–Cys548, Cys538–Cys555, Cys557–Cys566, Cys569–Cys586, Cys601–Cys610, Cys613–Cys628, Cys631–Cys645, Cys633–Cys652, Cys654–Cys663, Cys666–Cys681, Cys684–Cys696, Cys686–Cys703, and Cys705–Cys714. Laminin EGF-like domains follow at residues 299 to 355 (CVCN…ECEA), 356 to 425 (CNCH…GCIP), 426 to 469 (CSCD…FCLR), 491 to 535 (CDCN…ICQA), 536 to 588 (CWCS…ACDP), 590 to 630 (GTIN…GCSE), 631 to 683 (CKCH…GCQG), and 684 to 728 (CQCD…DLHH). A domain IV 1 (domain IV B) region spans residues 796–1265 (TEAVSGHITI…VAFYHKGALP (470 aa)). Disulfide bonds link Cys1266–Cys1278, Cys1268–Cys1285, Cys1287–Cys1296, Cys1299–Cys1309, Cys1312–Cys1319, Cys1314–Cys1326, Cys1328–Cys1337, Cys1340–Cys1353, Cys1356–Cys1371, Cys1358–Cys1378, Cys1380–Cys1389, Cys1392–Cys1402, Cys1405–Cys1417, Cys1407–Cys1424, Cys1426–Cys1435, and Cys1438–Cys1453. 4 consecutive Laminin EGF-like domains span residues 1266–1311 (CECH…RCKP), 1312–1355 (CSCG…GCEG), 1356–1404 (CNCS…ECVP), and 1405–1455 (CNCN…GCTS). The tract at residues 1266–1465 (CECHPTGATG…CFCFGVNNQC (200 aa)) is domain III B. One can recognise a Laminin IV type A domain in the interval 1476 to 1653 (VDMLGWHLET…SGRIALAVEI (178 aa)). Residues 1654–1821 (CACPPAYAGD…DSSPAEECDD (168 aa)) form a domain III A region. Disulfide bonds link Cys1687–Cys1696, Cys1689–Cys1703, Cys1706–Cys1715, Cys1718–Cys1731, Cys1734–Cys1746, Cys1736–Cys1755, Cys1757–Cys1766, and Cys1769–Cys1784. Laminin EGF-like domains are found at residues 1687 to 1733 (CNCN…SCRA) and 1734 to 1786 (CPCP…SCQP). Positions 1787-1821 (CSCNSNGQLGSCHPLTGDCINQEPKDSSPAEECDD) constitute a Laminin EGF-like 15; truncated domain. Residues 1822–2389 (CDSCVMTLLN…ARDAASKVAV (568 aa)) form a domain II and I region. Coiled-coil stretches lie at residues 1852-1941 (ASAG…KNVI) and 1987-2169 (KHLR…DELV). Residues 2278–2280 (RGD) carry the Cell attachment site motif. Residues 2322 to 2388 (RTQNEDFKKA…QARDAASKVA (67 aa)) are a coiled coil. N-linked (GlcNAc...) asparagine glycans are attached at residues Asn2365, Asn2502, and Asn2584. 5 Laminin G-like domains span residues 2390–2591 (PMRF…VEPC), 2598–2760 (SDKN…TKKC), 2767–2927 (VRSA…LGGC), 2986–3150 (ALQF…VSSC), and 3157–3330 (KGIY…LNGC). Intrachain disulfides connect Cys2561/Cys2591, Cys2737/Cys2760, Cys2895/Cys2927, Cys3127/Cys3150, and Cys3302/Cys3330.

In terms of assembly, laminin is a complex glycoprotein, consisting of three different polypeptide chains (alpha, beta, gamma), which are bound to each other by disulfide bonds into a cross-shaped molecule comprising one long and three short arms with globules at each end. Alpha-3 is a subunit of laminin-5 (laminin-332 or epiligrin/kalinin/nicein), laminin-6 (laminin-311 or K-laminin) and laminin-7 (laminin-321 or KS-laminin). In terms of tissue distribution, skin; respiratory, urinary, and digestive epithelia and in other specialized tissues with prominent secretory or protective functions. Epithelial basement membrane, and epithelial cell tongue that migrates into a wound bed. A differential and focal expression of the subunit alpha-3 is observed in the CNS.

It is found in the secreted. Its subcellular location is the extracellular space. The protein localises to the extracellular matrix. It localises to the basement membrane. Functionally, binding to cells via a high affinity receptor, laminin is thought to mediate the attachment, migration and organization of cells into tissues during embryonic development by interacting with other extracellular matrix components. Its function is as follows. Laminin-5 is thought to be involved in (1) cell adhesion via integrin alpha-3/beta-1 in focal adhesion and integrin alpha-6/beta-4 in hemidesmosomes, (2) signal transduction via tyrosine phosphorylation of pp125-FAK and p80, (3) differentiation of keratinocytes. This is Laminin subunit alpha-3 (LAMA3) from Homo sapiens (Human).